Consider the following 163-residue polypeptide: Cytochrome b6-f complex subunit 4 (163 aa).

3 helical membrane-spanning segments follow: residues Leu-36–Val-56, Leu-95–Glu-115, and Thr-131–Ile-151.

Belongs to the cytochrome b family. PetD subfamily. In terms of assembly, the 4 large subunits of the cytochrome b6-f complex are cytochrome b6, subunit IV (17 kDa polypeptide, petD), cytochrome f and the Rieske protein, while the 4 small subunits are petG, petL, petM and petN. The complex functions as a dimer.

The protein resides in the plastid. It localises to the chloroplast thylakoid membrane. In terms of biological role, component of the cytochrome b6-f complex, which mediates electron transfer between photosystem II (PSII) and photosystem I (PSI), cyclic electron flow around PSI, and state transitions. The protein is Cytochrome b6-f complex subunit 4 of Drimys granadensis.